The following is a 508-amino-acid chain: Catalase (508 aa).

Residues His-63 and Asn-136 contribute to the active site. Heme is bound at residue Tyr-346.

The protein belongs to the catalase family. In terms of assembly, homohexamer. The cofactor is heme.

It localises to the cytoplasm. It catalyses the reaction 2 H2O2 = O2 + 2 H2O. In terms of biological role, decomposes hydrogen peroxide into water and oxygen; serves to protect cells from the toxic effects of hydrogen peroxide. This is Catalase (katA) from Haemophilus influenzae (strain ATCC 51907 / DSM 11121 / KW20 / Rd).